Reading from the N-terminus, the 112-residue chain is uncharacterized protein (112 aa).

The interval glutamate 91–serine 112 is disordered. Positions serine 103–serine 112 are enriched in basic and acidic residues.

This is an uncharacterized protein from Caenorhabditis elegans.